The primary structure comprises 449 residues: Glutamyl-tRNA reductase (449 aa).

Substrate-binding positions include 49-52 (TCNR), S109, 114-116 (ETQ), and Q120. The Nucleophile role is filled by C50. 189 to 194 (GAGKMS) lines the NADP(+) pocket. Positions 427 to 449 (NFTHPREEMEESDEKRSYCGESR) are disordered.

Belongs to the glutamyl-tRNA reductase family. Homodimer.

It carries out the reaction (S)-4-amino-5-oxopentanoate + tRNA(Glu) + NADP(+) = L-glutamyl-tRNA(Glu) + NADPH + H(+). It participates in porphyrin-containing compound metabolism; protoporphyrin-IX biosynthesis; 5-aminolevulinate from L-glutamyl-tRNA(Glu): step 1/2. In terms of biological role, catalyzes the NADPH-dependent reduction of glutamyl-tRNA(Glu) to glutamate 1-semialdehyde (GSA). In Carboxydothermus hydrogenoformans (strain ATCC BAA-161 / DSM 6008 / Z-2901), this protein is Glutamyl-tRNA reductase.